Consider the following 133-residue polypeptide: MARVTVEDCVDKVENRFELVLLAGHRARQISQGVPITVDRDNDKNPVVALREIADETLSPDDLKEDLIHSLQKHVEVDEPEAAPAQIANAAEEIAEGIAEAGEEDVVTFDRMSEEELLAGIEGLVAPEKNDGF.

It belongs to the RNA polymerase subunit omega family. In terms of assembly, the RNAP catalytic core consists of 2 alpha, 1 beta, 1 beta' and 1 omega subunit. When a sigma factor is associated with the core the holoenzyme is formed, which can initiate transcription.

The enzyme catalyses RNA(n) + a ribonucleoside 5'-triphosphate = RNA(n+1) + diphosphate. Promotes RNA polymerase assembly. Latches the N- and C-terminal regions of the beta' subunit thereby facilitating its interaction with the beta and alpha subunits. This Brucella canis (strain ATCC 23365 / NCTC 10854 / RM-666) protein is DNA-directed RNA polymerase subunit omega.